A 477-amino-acid chain; its full sequence is SH3 domain-binding protein 5 homolog (477 aa).

A coiled-coil region spans residues 12 to 95 (QIQIELENLN…AAVKFQRANE (84 aa)). A phosphoserine mark is found at serine 113 and serine 115. Residues 122 to 221 (NAWQEMLNHA…YSTALRNLER (100 aa)) adopt a coiled-coil conformation. Disordered stretches follow at residues 224 to 258 (EDIH…ALPS) and 276 to 306 (GSQM…ETGA). A compositionally biased stretch (acidic residues) spans 291–305 (ETEDEEDACDYDETG).

The protein belongs to the SH3BP5 family.

The polypeptide is SH3 domain-binding protein 5 homolog (pcs) (Drosophila melanogaster (Fruit fly)).